The sequence spans 343 residues: Squamosa promoter-binding-like protein 11 (343 aa).

Positions 1-48 (MECNPVSSTTSSSLLWDWDATASAEPPPPPGKRGGRDSSSASASAKRG) are disordered. Composition is skewed to low complexity over residues 7–19 (SSTT…WDWD) and 37–48 (DSSSASASAKRG). The SBP-type zinc finger occupies 64–141 (APRCQVEGCG…SDHNARRRKP (78 aa)). Zn(2+)-binding residues include C67, C72, C89, H92, C108, C111, H115, and C127. A Bipartite nuclear localization signal motif is present at residues 124-140 (KRSCRRRLSDHNARRRK).

Expressed in stems, leaf sheaths, and young panicles.

It is found in the nucleus. Its function is as follows. Trans-acting factor that binds specifically to the consensus nucleotide sequence 5'-TNCGTACAA-3'. May be involved in panicle development. This chain is Squamosa promoter-binding-like protein 11 (SPL11), found in Oryza sativa subsp. japonica (Rice).